The primary structure comprises 370 residues: Ubiquinone biosynthesis O-methyltransferase, mitochondrial (370 aa).

The N-terminal 86 residues, 1 to 86 (MWGGSKLSSS…SYRLPWTRPY (86 aa)), are a transit peptide targeting the mitochondrion. R125 is a binding site for S-adenosyl-L-methionine. An N6-acetyllysine mark is found at K144 and K150. The S-adenosyl-L-methionine site is built by G155 and D176. K197 carries the N6-acetyllysine modification. S223 is a binding site for S-adenosyl-L-methionine. Mg(2+)-binding residues include E224, E227, and H228.

The protein belongs to the class I-like SAM-binding methyltransferase superfamily. UbiG/COQ3 family. Component of a multi-subunit COQ enzyme complex, composed of at least COQ3, COQ4, COQ5, COQ6, COQ7 and COQ9. It depends on Mg(2+) as a cofactor.

The protein localises to the mitochondrion inner membrane. It carries out the reaction 3,4-dihydroxy-5-(all-trans-decaprenyl)benzoate + S-adenosyl-L-methionine = 4-hydroxy-3-methoxy-5-(all-trans-decaprenyl)benzoate + S-adenosyl-L-homocysteine + H(+). The catalysed reaction is a 3-demethylubiquinone + S-adenosyl-L-methionine = a ubiquinone + S-adenosyl-L-homocysteine. It catalyses the reaction 3-demethylubiquinol-10 + S-adenosyl-L-methionine = ubiquinol-10 + S-adenosyl-L-homocysteine + H(+). It participates in cofactor biosynthesis; ubiquinone biosynthesis. Its function is as follows. O-methyltransferase required for two non-consecutive steps during ubiquinone biosynthesis. Catalyzes the 2 O-methylation of 3,4-dihydroxy-5-(all-trans-decaprenyl)benzoic acid into 4-hydroxy-3-methoxy-5-(all-trans-decaprenyl)benzoic acid. Also catalyzes the last step of ubiquinone biosynthesis by mediating methylation of 3-demethylubiquinone into ubiquinone. Also able to mediate the methylation of 3-demethylubiquinol-10 into ubiquinol-10. This is Ubiquinone biosynthesis O-methyltransferase, mitochondrial from Bos taurus (Bovine).